Here is a 525-residue protein sequence, read N- to C-terminus: Phosphoenolpyruvate carboxykinase (ATP) 1 (525 aa).

Residues Arg-55, Tyr-190, and Lys-196 each coordinate substrate. Residues Lys-196, His-215, and 231–239 (GLSGTGKTT) contribute to the ATP site. Positions 196 and 215 each coordinate Mn(2+). A Mn(2+)-binding site is contributed by Asp-252. Positions 280, 317, and 442 each coordinate ATP. Arg-317 provides a ligand contact to substrate.

Belongs to the phosphoenolpyruvate carboxykinase (ATP) family. Mn(2+) serves as cofactor.

The protein resides in the cytoplasm. The enzyme catalyses oxaloacetate + ATP = phosphoenolpyruvate + ADP + CO2. It participates in carbohydrate biosynthesis; gluconeogenesis. In terms of biological role, involved in the gluconeogenesis. Catalyzes the conversion of oxaloacetate (OAA) to phosphoenolpyruvate (PEP) through direct phosphoryl transfer between the nucleoside triphosphate and OAA. In Moorella thermoacetica (strain ATCC 39073 / JCM 9320), this protein is Phosphoenolpyruvate carboxykinase (ATP) 1.